Here is a 154-residue protein sequence, read N- to C-terminus: Interleukin-2 (154 aa).

The N-terminal stretch at 1–20 is a signal peptide; it reads MYKLQLLSCIALTLALVANS. T23 is a glycosylation site (O-linked (GalNAc...) threonine). C78 and C126 are joined by a disulfide.

It belongs to the IL-2 family.

The protein resides in the secreted. In terms of biological role, cytokine produced by activated CD4-positive helper T-cells and to a lesser extend activated CD8-positive T-cells and natural killer (NK) cells that plays pivotal roles in the immune response and tolerance. Binds to a receptor complex composed of either the high-affinity trimeric IL-2R (IL2RA/CD25, IL2RB/CD122 and IL2RG/CD132) or the low-affinity dimeric IL-2R (IL2RB and IL2RG). Interaction with the receptor leads to oligomerization and conformation changes in the IL-2R subunits resulting in downstream signaling starting with phosphorylation of JAK1 and JAK3. In turn, JAK1 and JAK3 phosphorylate the receptor to form a docking site leading to the phosphorylation of several substrates including STAT5. This process leads to activation of several pathways including STAT, phosphoinositide-3-kinase/PI3K and mitogen-activated protein kinase/MAPK pathways. Functions as a T-cell growth factor and can increase NK-cell cytolytic activity as well. Promotes strong proliferation of activated B-cells and subsequently immunoglobulin production. Plays a pivotal role in regulating the adaptive immune system by controlling the survival and proliferation of regulatory T-cells, which are required for the maintenance of immune tolerance. Moreover, participates in the differentiation and homeostasis of effector T-cell subsets, including Th1, Th2, Th17 as well as memory CD8-positive T-cells. The polypeptide is Interleukin-2 (IL2) (Lama glama (Llama)).